A 556-amino-acid polypeptide reads, in one-letter code: Formate--tetrahydrofolate ligase (556 aa).

Residue 65–72 participates in ATP binding; the sequence is TPAGEGKS.

This sequence belongs to the formate--tetrahydrofolate ligase family.

It carries out the reaction (6S)-5,6,7,8-tetrahydrofolate + formate + ATP = (6R)-10-formyltetrahydrofolate + ADP + phosphate. It participates in one-carbon metabolism; tetrahydrofolate interconversion. In Streptococcus equi subsp. zooepidemicus (strain MGCS10565), this protein is Formate--tetrahydrofolate ligase.